The following is a 925-amino-acid chain: Isoleucine--tRNA ligase (925 aa).

The 'HIGH' region signature appears at 57–67 (PYANGDIHIGH). Residue Glu-553 coordinates L-isoleucyl-5'-AMP. Residues 594-598 (KMSKS) carry the 'KMSKS' region motif. Lys-597 is a binding site for ATP. Positions 889, 892, 909, and 912 each coordinate Zn(2+).

This sequence belongs to the class-I aminoacyl-tRNA synthetase family. IleS type 1 subfamily. Monomer. Zn(2+) is required as a cofactor.

It is found in the cytoplasm. It carries out the reaction tRNA(Ile) + L-isoleucine + ATP = L-isoleucyl-tRNA(Ile) + AMP + diphosphate. Catalyzes the attachment of isoleucine to tRNA(Ile). As IleRS can inadvertently accommodate and process structurally similar amino acids such as valine, to avoid such errors it has two additional distinct tRNA(Ile)-dependent editing activities. One activity is designated as 'pretransfer' editing and involves the hydrolysis of activated Val-AMP. The other activity is designated 'posttransfer' editing and involves deacylation of mischarged Val-tRNA(Ile). The polypeptide is Isoleucine--tRNA ligase (Brevibacillus brevis (strain 47 / JCM 6285 / NBRC 100599)).